The following is a 149-amino-acid chain: Arginine repressor (149 aa).

It belongs to the ArgR family.

It localises to the cytoplasm. Its pathway is amino-acid biosynthesis; L-arginine biosynthesis [regulation]. Functionally, regulates arginine biosynthesis genes. The sequence is that of Arginine repressor from Bacillus pumilus (strain SAFR-032).